Reading from the N-terminus, the 73-residue chain is MKLQFLFIFIAFCVMLFAQIATAKPVEAEVAQSNLDECEVEAEVAQPKLYQRGEGGNGMEPIPEDVLNEALNA.

Positions 1–23 (MKLQFLFIFIAFCVMLFAQIATA) are cleaved as a signal peptide.

Interacts with human F2 (thrombin). As to expression, salivary gland (at protein level).

Its subcellular location is the secreted. Its function is as follows. Acts as a competitive inhibitor of host thrombin. In Xenopsylla cheopis (Oriental rat flea), this protein is Salivary thrombin inhibitor XC-42.